A 102-amino-acid chain; its full sequence is Small ribosomal subunit protein uS10 (102 aa).

The protein belongs to the universal ribosomal protein uS10 family. In terms of assembly, part of the 30S ribosomal subunit.

In terms of biological role, involved in the binding of tRNA to the ribosomes. The chain is Small ribosomal subunit protein uS10 from Xanthobacter autotrophicus (strain ATCC BAA-1158 / Py2).